The sequence spans 704 residues: MATTALDLAKVRNIGIMAHIDAGKTTTTERILFYTGVNYKLGETHEGSATMDWMKEEQERGITITSAATTCRWNDTTINIIDTPGHVDFTIEVERSLRVLDGAVAVFDGKEGVEPQSEQVWRQADRYNVPRICFVNKMDKIGADFQRCVDMIRERLGANPLAVQLPIGAESDFQGVIDLIRMKAYVWSPDAPKGEMYDTIEIPDAYAEAAQEGHERLVEAVAEADDEIMELYLEGQEPTVEQLVAAIRRATISGAAVPVLCGSAFKNKGVQPLLDAIVAYLPSPLDIEAIEGHDPQDKDEEVTLQRKPSEEEPLAALAFKIMSDQHLGKLTYLRIYSGVLESGMQVLNSIKGRKERIGKIYRMHANKREEITRVGAGDIVAVVGLKDTTTGETLCDQANPIVLESMTFPAPVIEVAIEPKTKSDQEKLGTAIQRLAEEDPSFRVTTDEETGQTVISGMGELHLEVLVNRMREEFKVEANIGKPQVAYRETIRRKVEGVEYTHKKQTGGAGQYGRVVIDLEPLPIDGDGDSPGYEFVNNITGGRIPREYIPSVDAGCQEAAQFGVLAGYPLVGIKVTLQDGAYHDVDSSELAFKIAGSMAFKEAASKANPVLLEPVMAVEVTTPEEYMGDVIGDLNSRRGQIQSMEERAGTRVVKALVPLSEMFGYVGDLRSRTQGRANYTMVFHSYAEVPSNVSQEIVAKARGE.

Residues 9 to 285 (AKVRNIGIMA…AIVAYLPSPL (277 aa)) enclose the tr-type G domain. GTP contacts are provided by residues 18-25 (AHIDAGKT), 82-86 (DTPGH), and 136-139 (NKMD).

The protein belongs to the TRAFAC class translation factor GTPase superfamily. Classic translation factor GTPase family. EF-G/EF-2 subfamily.

The protein localises to the cytoplasm. Functionally, catalyzes the GTP-dependent ribosomal translocation step during translation elongation. During this step, the ribosome changes from the pre-translocational (PRE) to the post-translocational (POST) state as the newly formed A-site-bound peptidyl-tRNA and P-site-bound deacylated tRNA move to the P and E sites, respectively. Catalyzes the coordinated movement of the two tRNA molecules, the mRNA and conformational changes in the ribosome. This Thermobifida fusca (strain YX) protein is Elongation factor G.